Consider the following 365-residue polypeptide: Dual-specificity RNA methyltransferase RlmN (365 aa).

Residue Glu91 is the Proton acceptor of the active site. Residues 97–337 (ETSRGTLCIS…TTVRKTRGDD (241 aa)) enclose the Radical SAM core domain. A disulfide bridge links Cys104 with Cys342. The [4Fe-4S] cluster site is built by Cys111, Cys115, and Cys118. S-adenosyl-L-methionine-binding positions include 168 to 169 (GE), Ser200, 222 to 224 (SLH), and Asn299. Cys342 serves as the catalytic S-methylcysteine intermediate.

Belongs to the radical SAM superfamily. RlmN family. The cofactor is [4Fe-4S] cluster.

The protein localises to the cytoplasm. The catalysed reaction is adenosine(2503) in 23S rRNA + 2 reduced [2Fe-2S]-[ferredoxin] + 2 S-adenosyl-L-methionine = 2-methyladenosine(2503) in 23S rRNA + 5'-deoxyadenosine + L-methionine + 2 oxidized [2Fe-2S]-[ferredoxin] + S-adenosyl-L-homocysteine. The enzyme catalyses adenosine(37) in tRNA + 2 reduced [2Fe-2S]-[ferredoxin] + 2 S-adenosyl-L-methionine = 2-methyladenosine(37) in tRNA + 5'-deoxyadenosine + L-methionine + 2 oxidized [2Fe-2S]-[ferredoxin] + S-adenosyl-L-homocysteine. Its function is as follows. Specifically methylates position 2 of adenine 2503 in 23S rRNA and position 2 of adenine 37 in tRNAs. m2A2503 modification seems to play a crucial role in the proofreading step occurring at the peptidyl transferase center and thus would serve to optimize ribosomal fidelity. This Nitrosospira multiformis (strain ATCC 25196 / NCIMB 11849 / C 71) protein is Dual-specificity RNA methyltransferase RlmN.